Consider the following 388-residue polypeptide: 1-deoxy-D-xylulose 5-phosphate reductoisomerase (388 aa).

Threonine 10, glycine 11, serine 12, isoleucine 13, lysine 37, asparagine 38, and asparagine 123 together coordinate NADPH. Lysine 124 serves as a coordination point for 1-deoxy-D-xylulose 5-phosphate. NADPH is bound at residue glutamate 125. Aspartate 149 contributes to the Mn(2+) binding site. Positions 150, 151, 175, and 198 each coordinate 1-deoxy-D-xylulose 5-phosphate. Glutamate 151 lines the Mn(2+) pocket. Glycine 204 lines the NADPH pocket. Residues serine 211, asparagine 216, lysine 217, and glutamate 220 each coordinate 1-deoxy-D-xylulose 5-phosphate. Residue glutamate 220 coordinates Mn(2+).

This sequence belongs to the DXR family. Mg(2+) is required as a cofactor. Requires Mn(2+) as cofactor.

The enzyme catalyses 2-C-methyl-D-erythritol 4-phosphate + NADP(+) = 1-deoxy-D-xylulose 5-phosphate + NADPH + H(+). It participates in isoprenoid biosynthesis; isopentenyl diphosphate biosynthesis via DXP pathway; isopentenyl diphosphate from 1-deoxy-D-xylulose 5-phosphate: step 1/6. Catalyzes the NADPH-dependent rearrangement and reduction of 1-deoxy-D-xylulose-5-phosphate (DXP) to 2-C-methyl-D-erythritol 4-phosphate (MEP). This Pelagibacter ubique (strain HTCC1062) protein is 1-deoxy-D-xylulose 5-phosphate reductoisomerase.